The following is a 1893-amino-acid chain: Protein TIC 214 (1893 aa).

Transmembrane regions (helical) follow at residues 18–38, 63–83, 87–107, 127–147, 175–195, and 224–244; these read IINSVVVVGLYYGFLTTFSIG, AITGFITGQLMMFISIYYAPL, LGRPHTITVLALPYLLFHFFW, LSIQCVFLNNLIFQLLNHFIL, VGWLIGHILFMKWVGLVLVWI, and IFSILLFITCVYYLGRIPSPI. 2 stretches are compositionally biased toward basic and acidic residues: residues 249 to 258 and 268 to 287; these read MKETSETEER and EIERTSETKGTKQEQERSTE. Positions 249-317 are disordered; sequence MKETSETEER…TEEIRVNGKE (69 aa). The segment covering 298–309 has biased composition (acidic residues); sequence EKEDPDKIDETE. The helical transmembrane segment at 1126–1146 threads the bilayer; the sequence is LHYFIKFFIERIYIDILLCLI.

It belongs to the TIC214 family. As to quaternary structure, part of the Tic complex.

It localises to the plastid. The protein localises to the chloroplast inner membrane. Its function is as follows. Involved in protein precursor import into chloroplasts. May be part of an intermediate translocation complex acting as a protein-conducting channel at the inner envelope. This is Protein TIC 214 from Vitis vinifera (Grape).